The sequence spans 122 residues: Large ribosomal subunit protein uL14 (122 aa).

This sequence belongs to the universal ribosomal protein uL14 family. In terms of assembly, part of the 50S ribosomal subunit. Forms a cluster with proteins L3 and L19. In the 70S ribosome, L14 and L19 interact and together make contacts with the 16S rRNA in bridges B5 and B8.

Its function is as follows. Binds to 23S rRNA. Forms part of two intersubunit bridges in the 70S ribosome. This Bartonella quintana (strain Toulouse) (Rochalimaea quintana) protein is Large ribosomal subunit protein uL14.